A 202-amino-acid chain; its full sequence is MLDLLKISVTGDPSSGKTEACQVFEDLGAYVISADKVSHSFLVPYTSVGQRIIDLLGPEIIIENTLSRKAIAEKVFGNRDLLLSLEEILHPEVCRFVEEKYAHVVQEQKYPLFIAEFPLLYEIQYADWFDQVILISADTGIRKERFLKKTGGSDTSFDLRCARFSSLEEKILRADVVIENNGTKEEFRCKVKQCFKALKGTI.

A DPCK domain is found at 6–202; sequence KISVTGDPSS…QCFKALKGTI (197 aa). Position 14–19 (14–19) interacts with ATP; sequence SSGKTE.

This sequence belongs to the CoaE family.

It localises to the cytoplasm. It catalyses the reaction 3'-dephospho-CoA + ATP = ADP + CoA + H(+). The protein operates within cofactor biosynthesis; coenzyme A biosynthesis; CoA from (R)-pantothenate: step 5/5. Catalyzes the phosphorylation of the 3'-hydroxyl group of dephosphocoenzyme A to form coenzyme A. The protein is Dephospho-CoA kinase of Chlamydia trachomatis serovar A (strain ATCC VR-571B / DSM 19440 / HAR-13).